The sequence spans 468 residues: Glutamate--tRNA ligase (468 aa).

The 'HIGH' region signature appears at 8 to 18 (PSPTGFLHVGG). Positions 97, 99, 124, and 126 each coordinate Zn(2+). The 'KMSKS' region motif lies at 236 to 240 (KLSKR). Lysine 239 is a binding site for ATP.

Belongs to the class-I aminoacyl-tRNA synthetase family. Glutamate--tRNA ligase type 1 subfamily. As to quaternary structure, monomer. It depends on Zn(2+) as a cofactor.

Its subcellular location is the cytoplasm. It carries out the reaction tRNA(Glu) + L-glutamate + ATP = L-glutamyl-tRNA(Glu) + AMP + diphosphate. Functionally, catalyzes the attachment of glutamate to tRNA(Glu) in a two-step reaction: glutamate is first activated by ATP to form Glu-AMP and then transferred to the acceptor end of tRNA(Glu). This Francisella tularensis subsp. mediasiatica (strain FSC147) protein is Glutamate--tRNA ligase.